A 141-amino-acid chain; its full sequence is Protein X (141 aa).

A disordered region spans residues 25-52; that stretch reads SSGPSFPRPAAGSAASSASSPSPSDDSD. Residues 68–113 form a mitochondrial targeting sequence region; the sequence is PCCLVFTCADLRTMDSTVNFVSWHANRQLGMPSKDLWTPYIKDQLL.

Belongs to the orthohepadnavirus protein X family. In terms of assembly, may form homodimer. May interact with host CEBPA, CFLAR, CREB1, DDB1, E4F1, HBXIP, HSPD1/HSP60, NFKBIA, POLR2E and SMAD4. Interacts with host SMC5-SMC6 complex and induces its degradation. Interacts with host TRPC4AP; leading to prevent ubiquitination of TRPC4AP. Interacts with host PLSCR1; this interaction promotes ubiquitination and degradation of HBx and impairs HBx-mediated cell proliferation. In terms of processing, a fraction may be phosphorylated in insect cells and HepG2 cells, a human hepatoblastoma cell line. Phosphorylated in vitro by host protein kinase C or mitogen-activated protein kinase. N-acetylated in insect cells.

The protein localises to the host cytoplasm. Its subcellular location is the host nucleus. It localises to the host mitochondrion. In terms of biological role, multifunctional protein that plays a role in silencing host antiviral defenses and promoting viral transcription. Does not seem to be essential for HBV infection. May be directly involved in development of cirrhosis and liver cancer (hepatocellular carcinoma). Most of cytosolic activities involve modulation of cytosolic calcium. The effect on apoptosis is controversial depending on the cell types in which the studies have been conducted. May induce apoptosis by localizing in mitochondria and causing loss of mitochondrial membrane potential. May also modulate apoptosis by binding host CFLAR, a key regulator of the death-inducing signaling complex (DISC). Promotes viral transcription by using the host E3 ubiquitin ligase DDB1 to target the SMC5-SMC6 complex to proteasomal degradation. This host complex would otherwise bind to viral episomal DNA, and prevents its transcription. Moderately stimulates transcription of many different viral and cellular transcription elements. Promoters and enhancers stimulated by HBx contain DNA binding sites for NF-kappa-B, AP-1, AP-2, c-EBP, ATF/CREB, or the calcium-activated factor NF-AT. This Woodchuck hepatitis B virus (isolate 2) (WHV) protein is Protein X.